A 334-amino-acid chain; its full sequence is GTP 3',8-cyclase (334 aa).

The region spanning 13–239 (RFHRKFYYLR…KVKAANDGPA (227 aa)) is the Radical SAM core domain. R22 is a binding site for GTP. 2 residues coordinate [4Fe-4S] cluster: C29 and C33. Y35 contributes to the S-adenosyl-L-methionine binding site. C36 is a [4Fe-4S] cluster binding site. R73 contacts GTP. Residue G77 participates in S-adenosyl-L-methionine binding. T104 is a binding site for GTP. S128 provides a ligand contact to S-adenosyl-L-methionine. A GTP-binding site is contributed by K165. S-adenosyl-L-methionine is bound at residue M199. Residues C262 and C265 each contribute to the [4Fe-4S] cluster site. Position 267-269 (267-269 (RLR)) interacts with GTP. C279 serves as a coordination point for [4Fe-4S] cluster.

This sequence belongs to the radical SAM superfamily. MoaA family. As to quaternary structure, monomer and homodimer. It depends on [4Fe-4S] cluster as a cofactor.

It carries out the reaction GTP + AH2 + S-adenosyl-L-methionine = (8S)-3',8-cyclo-7,8-dihydroguanosine 5'-triphosphate + 5'-deoxyadenosine + L-methionine + A + H(+). It functions in the pathway cofactor biosynthesis; molybdopterin biosynthesis. Catalyzes the cyclization of GTP to (8S)-3',8-cyclo-7,8-dihydroguanosine 5'-triphosphate. The chain is GTP 3',8-cyclase from Vibrio vulnificus (strain CMCP6).